Consider the following 314-residue polypeptide: tRNA uridine(34) hydroxylase (314 aa).

Residues 135–229 (ADPETLVIDT…YLEQIPAEES (95 aa)) form the Rhodanese domain. The active-site Cysteine persulfide intermediate is Cys189.

It belongs to the TrhO family.

The enzyme catalyses uridine(34) in tRNA + AH2 + O2 = 5-hydroxyuridine(34) in tRNA + A + H2O. Functionally, catalyzes oxygen-dependent 5-hydroxyuridine (ho5U) modification at position 34 in tRNAs. The polypeptide is tRNA uridine(34) hydroxylase (Sinorhizobium fredii (strain NBRC 101917 / NGR234)).